A 131-amino-acid chain; its full sequence is Ribonuclease VapC30 (131 aa).

Positions Met-1 to Ala-129 constitute a PINc domain. Residues Asp-4 and Asp-99 each contribute to the Mg(2+) site.

The protein belongs to the PINc/VapC protein family. Mg(2+) is required as a cofactor.

In terms of biological role, toxic component of a type II toxin-antitoxin (TA) system. An RNase. Its toxic effect is neutralized by coexpression with cognate antitoxin VapB30. The protein is Ribonuclease VapC30 of Mycobacterium tuberculosis (strain CDC 1551 / Oshkosh).